Consider the following 117-residue polypeptide: Hainantoxin-XV-3 (117 aa).

Positions 1–20 (MKLCAVIIASLLVCVAVASS) are cleaved as a signal peptide. The disordered stretch occupies residues 20 to 55 (SSDNQKEFAQEKEMTREETQSLGEHEKDDEVTGSEE). A propeptide spanning residues 21-56 (SDNQKEFAQEKEMTREETQSLGEHEKDDEVTGSEER) is cleaved from the precursor. Residues 23–55 (NQKEFAQEKEMTREETQSLGEHEKDDEVTGSEE) show a composition bias toward basic and acidic residues. 4 cysteine pairs are disulfide-bonded: cysteine 58–cysteine 72, cysteine 65–cysteine 78, cysteine 69–cysteine 115, and cysteine 71–cysteine 91.

It belongs to the neurotoxin 03 (Tx2) family. 02 subfamily. HNTX-XV sub-subfamily. As to expression, expressed by the venom gland.

The protein localises to the secreted. Functionally, putative ion channel inhibitor. This is Hainantoxin-XV-3 from Cyriopagopus hainanus (Chinese bird spider).